The sequence spans 110 residues: MFGGKGGLGNLMKQAQQMQDKMQKMQEEIAQLEVTGESGAGLVKVTINGAHNCRRVEIDPSLLEDDKEMLEDLVAAAFNDAARRIEETQKEKMASVSAGMQLPPGFKMPF.

Residues 1–22 (MFGGKGGLGNLMKQAQQMQDKM) are disordered.

The protein belongs to the YbaB/EbfC family. In terms of assembly, homodimer.

The protein localises to the cytoplasm. Its subcellular location is the nucleoid. Its function is as follows. Binds to DNA and alters its conformation. May be involved in regulation of gene expression, nucleoid organization and DNA protection. This chain is Nucleoid-associated protein KPK_4227, found in Klebsiella pneumoniae (strain 342).